Here is a 202-residue protein sequence, read N- to C-terminus: Small ribosomal subunit protein uS4c (202 aa).

One can recognise an S4 RNA-binding domain in the interval 90–153 (MRLDNIIFRL…KSETIISKNI (64 aa)).

Belongs to the universal ribosomal protein uS4 family. In terms of assembly, part of the 30S ribosomal subunit. Contacts protein S5. The interaction surface between S4 and S5 is involved in control of translational fidelity.

It is found in the plastid. It localises to the chloroplast. One of the primary rRNA binding proteins, it binds directly to 16S rRNA where it nucleates assembly of the body of the 30S subunit. In terms of biological role, with S5 and S12 plays an important role in translational accuracy. This chain is Small ribosomal subunit protein uS4c (rps4), found in Catharomnion ciliatum (Moss).